Here is a 167-residue protein sequence, read N- to C-terminus: Inclusion membrane protein G (167 aa).

2 helical membrane passes run 37–57 (LSLF…AVLF) and 63–83 (VLPY…AVIV). Disordered stretches follow at residues 97–136 (KRSP…STFG) and 148–167 (VSGA…SHSF). Positions 122-134 (ESASPQASPTSST) are enriched in low complexity. A Phosphorylation-dependent binding motif motif is present at residues 161–166 (RSRSHS). Phosphoserine is present on Ser-166.

In terms of processing, phosphorylated by chlamydial kinase Pnk1.

The protein localises to the secreted. It is found in the host vacuole. The protein resides in the host pathogen-containing vacuole. It localises to the host pathogen-containing vacuole membrane. Inclusion membrane protein probably involved in early modification events of the chlamydial inclusion. Binds to the host cell 14-3-3 beta (YWHAB); phosphorylation of Ser-166 is probably required. This chain is Inclusion membrane protein G (incG), found in Chlamydia trachomatis serovar D (strain ATCC VR-885 / DSM 19411 / UW-3/Cx).